The chain runs to 522 residues: FAD-dependent monooxygenase fsr3 (522 aa).

Residues 1-27 (MKNTQTNGTHPIIDKKPNGTLNGDHQE) form a disordered region. Arg164 contacts FAD. Residue Arg245 is part of the active site. Asp369 and Ala382 together coordinate FAD.

This sequence belongs to the paxM FAD-dependent monooxygenase family. It depends on FAD as a cofactor.

The protein operates within polyketide biosynthesis. In terms of biological role, FAD-dependent monooxygenase; part of the gene cluster that mediates the biosynthesis of fusarubins, highly pigmented naphthoquinones responsible for the coloration of the fruiting bodies. The non-reducing polyketide synthase FSR1 is responsible for the condensation of seven acetyl-CoA units to yield a haptaketide. After rings A and B are formed by aldol-type cyclization, the PKS-derived product is released as 6-O-demethylfusarubinaldehyde. Then, two hydroxyl groups at C-5 and C-10 are incorporated by FSR3, and simultaneously hydroxyl groups at C-6 and C-8 are methylated by FSR2. The aldehyde is, on the one hand, reduced by FSR3 to 8-O-methylfusarubin alcohol, which equilibrates mainly with 8-O-methylfusarubin and only small amounts of 8-O-methylnectriafurone. On the other hand, the aldehyde can be oxidized to form 8-O-methylfusarubinic acid, a reaction driven by FSR3 equilibrating with 8-O-methylfusarubinlactone, finally resulting in 8-O-methylanhydrofusarubinlactol after a further reduction step and loss of water. 8-O-Methylfusarubinic acid can also undergo decarboxylation, resulting in 8-O-methyl-13-hydroxynorjavanicin after another hydroxylation step at C-13. Both steps are most likely also accomplished by FSR3. No enzymatic function has been determined so far for either FSR4 and FSR5. Their deletion does not alter the product spectrum, but the possibility that they catalyze specific enzymatic steps during perithecium development cannot be ruled out. FSR4 might possess a regulatory function in the biosynthesis of fusarubins. The sequence is that of FAD-dependent monooxygenase fsr3 from Gibberella fujikuroi (strain CBS 195.34 / IMI 58289 / NRRL A-6831) (Bakanae and foot rot disease fungus).